We begin with the raw amino-acid sequence, 113 residues long: Hydrogenase maturation factor HypA (113 aa).

His-2 contacts Ni(2+). Positions 70, 73, 86, and 88 each coordinate Zn(2+).

This sequence belongs to the HypA/HybF family.

Involved in the maturation of [NiFe] hydrogenases. Required for nickel insertion into the metal center of the hydrogenase. This chain is Hydrogenase maturation factor HypA, found in Trichormus variabilis (strain ATCC 29413 / PCC 7937) (Anabaena variabilis).